A 617-amino-acid polypeptide reads, in one-letter code: Proline--tRNA ligase (617 aa).

Belongs to the class-II aminoacyl-tRNA synthetase family. ProS type 1 subfamily. As to quaternary structure, homodimer.

It is found in the cytoplasm. The catalysed reaction is tRNA(Pro) + L-proline + ATP = L-prolyl-tRNA(Pro) + AMP + diphosphate. Its function is as follows. Catalyzes the attachment of proline to tRNA(Pro) in a two-step reaction: proline is first activated by ATP to form Pro-AMP and then transferred to the acceptor end of tRNA(Pro). As ProRS can inadvertently accommodate and process non-cognate amino acids such as alanine and cysteine, to avoid such errors it has two additional distinct editing activities against alanine. One activity is designated as 'pretransfer' editing and involves the tRNA(Pro)-independent hydrolysis of activated Ala-AMP. The other activity is designated 'posttransfer' editing and involves deacylation of mischarged Ala-tRNA(Pro). The misacylated Cys-tRNA(Pro) is not edited by ProRS. This is Proline--tRNA ligase from Streptococcus pneumoniae (strain CGSP14).